The primary structure comprises 432 residues: Adenylosuccinate synthetase (432 aa).

GTP contacts are provided by residues 13–19 (GDEGKGK) and 41–43 (GHT). Residue aspartate 14 is the Proton acceptor of the active site. Mg(2+)-binding residues include aspartate 14 and glycine 41. Residues 14 to 17 (DEGK), 39 to 42 (NAGH), threonine 130, arginine 144, glutamine 225, threonine 240, and arginine 304 each bind IMP. Histidine 42 serves as the catalytic Proton donor. Residue 300-306 (ATTGRRR) coordinates substrate. GTP contacts are provided by residues arginine 306, 332–334 (KLD), and 415–417 (STG).

This sequence belongs to the adenylosuccinate synthetase family. As to quaternary structure, homodimer. It depends on Mg(2+) as a cofactor.

Its subcellular location is the cytoplasm. It carries out the reaction IMP + L-aspartate + GTP = N(6)-(1,2-dicarboxyethyl)-AMP + GDP + phosphate + 2 H(+). It participates in purine metabolism; AMP biosynthesis via de novo pathway; AMP from IMP: step 1/2. Functionally, plays an important role in the de novo pathway of purine nucleotide biosynthesis. Catalyzes the first committed step in the biosynthesis of AMP from IMP. The protein is Adenylosuccinate synthetase of Escherichia coli (strain K12).